A 257-amino-acid chain; its full sequence is Small ribosomal subunit protein uS2 (257 aa).

Residues 229–257 (QFTPATTSSQEVDKASEQVEIAADDIDEE) are disordered.

It belongs to the universal ribosomal protein uS2 family.

The chain is Small ribosomal subunit protein uS2 from Caldicellulosiruptor bescii (strain ATCC BAA-1888 / DSM 6725 / KCTC 15123 / Z-1320) (Anaerocellum thermophilum).